Here is a 209-residue protein sequence, read N- to C-terminus: Vacuolar protein sorting-associated protein 28 homolog (209 aa).

The VPS28 N-terminal domain maps to 1 to 105 (MSQNSNLMRE…REGRPITVKD (105 aa)). In terms of domain architecture, VPS28 C-terminal spans 109-205 (NVLKHIASIV…AYQSFQKALN (97 aa)).

The protein belongs to the VPS28 family. Component of the ESCRT-I complex (endosomal sorting complex required for transport I).

It is found in the endosome. Functionally, component of the ESCRT-I complex, a regulator of vesicular trafficking process. This is Vacuolar protein sorting-associated protein 28 homolog from Caenorhabditis briggsae.